Here is a 157-residue protein sequence, read N- to C-terminus: Endoribonuclease YbeY (157 aa).

The Zn(2+) site is built by His114, His118, and His124.

Belongs to the endoribonuclease YbeY family. The cofactor is Zn(2+).

It is found in the cytoplasm. In terms of biological role, single strand-specific metallo-endoribonuclease involved in late-stage 70S ribosome quality control and in maturation of the 3' terminus of the 16S rRNA. This is Endoribonuclease YbeY from Yersinia enterocolitica serotype O:8 / biotype 1B (strain NCTC 13174 / 8081).